The chain runs to 147 residues: Urease accessory protein UreE (147 aa).

The protein belongs to the UreE family.

It localises to the cytoplasm. Its function is as follows. Involved in urease metallocenter assembly. Binds nickel. Probably functions as a nickel donor during metallocenter assembly. This is Urease accessory protein UreE from Marinomonas sp. (strain MWYL1).